The primary structure comprises 287 residues: Nitrogenase iron protein (287 aa).

8–15 contacts ATP; it reads GKGGIGKS. Position 96 (C96) interacts with [4Fe-4S] cluster. R99 bears the ADP-ribosylarginine; by dinitrogenase reductase ADP-ribosyltransferase mark. C130 is a [4Fe-4S] cluster binding site.

This sequence belongs to the NifH/BchL/ChlL family. Homodimer. [4Fe-4S] cluster is required as a cofactor. The reversible ADP-ribosylation of Arg-99 inactivates the nitrogenase reductase and regulates nitrogenase activity.

The catalysed reaction is N2 + 8 reduced [2Fe-2S]-[ferredoxin] + 16 ATP + 16 H2O = H2 + 8 oxidized [2Fe-2S]-[ferredoxin] + 2 NH4(+) + 16 ADP + 16 phosphate + 6 H(+). In terms of biological role, the key enzymatic reactions in nitrogen fixation are catalyzed by the nitrogenase complex, which has 2 components: the iron protein and the molybdenum-iron protein. This chain is Nitrogenase iron protein, found in Frankia casuarinae (strain DSM 45818 / CECT 9043 / HFP020203 / CcI3).